Consider the following 280-residue polypeptide: Probable endonuclease 4 (280 aa).

The Zn(2+) site is built by His69, His109, Glu145, Asp179, His182, His216, Asp229, His231, and Glu261.

The protein belongs to the AP endonuclease 2 family. Requires Zn(2+) as cofactor.

The enzyme catalyses Endonucleolytic cleavage to 5'-phosphooligonucleotide end-products.. Endonuclease IV plays a role in DNA repair. It cleaves phosphodiester bonds at apurinic or apyrimidinic (AP) sites, generating a 3'-hydroxyl group and a 5'-terminal sugar phosphate. In Pelodictyon phaeoclathratiforme (strain DSM 5477 / BU-1), this protein is Probable endonuclease 4.